Here is a 782-residue protein sequence, read N- to C-terminus: Chaoptin (782 aa).

LRR repeat units follow at residues 16 to 37, 43 to 64, 67 to 88, 93 to 114, 117 to 138, 141 to 162, 165 to 186, 191 to 212, 224 to 245, 249 to 270, 273 to 294, 297 to 318, 321 to 342, 344 to 364, 370 to 391, 395 to 416, 419 to 442, 446 to 467, 468 to 488, 491 to 512, 514 to 535, and 539 to 560; these read SLLT…PSDA, RLEE…SFHF, SLKK…TFQG, DLTE…TFAD, QLEQ…AFMN, SLKR…TFQN, ELED…IFDQ, GMFH…PSVP, NIKV…FFRP, SLMQ…LFGN, HLQV…TFRN, KLQW…LFRF, NLRI…LFRE, GLER…TSLS, TLSE…GQLA, CLSW…TFKG, RLAS…SFQG, TLLH…STPN, LLSL…VAGN, SLRY…THSL, ELRH…SLLG, and QLEE…AFCK. N196, N234, and N262 each carry an N-linked (GlcNAc...) asparagine glycan. N-linked (GlcNAc...) asparagine glycosylation is found at N454 and N488. N-linked (GlcNAc...) asparagine glycosylation is present at N530. N618, N648, and N667 each carry an N-linked (GlcNAc...) asparagine glycan.

The protein belongs to the chaoptin family.

It is found in the cell membrane. Its function is as follows. Required for photoreceptor cell morphogenesis. Mediates homophilic cellular adhesion. This chain is Chaoptin (CHP), found in Tribolium castaneum (Red flour beetle).